Reading from the N-terminus, the 923-residue chain is DNA gyrase subunit A (923 aa).

Positions 34 to 534 (LPDARDGLKP…SQVDLTIADL (501 aa)) constitute a Topo IIA-type catalytic domain. The O-(5'-phospho-DNA)-tyrosine intermediate role is filled by Tyr-122. Positions 561–567 (QRRGGKG) match the GyrA-box motif. Residues 881-923 (ERVQEPSGGDDEDLPEGEEAAESLGESAESESEPAAEAEGNEE) are disordered. Composition is skewed to acidic residues over residues 888-901 (GGDD…EEAA) and 908-923 (AESE…GNEE).

It belongs to the type II topoisomerase GyrA/ParC subunit family. As to quaternary structure, heterotetramer, composed of two GyrA and two GyrB chains. In the heterotetramer, GyrA contains the active site tyrosine that forms a transient covalent intermediate with DNA, while GyrB binds cofactors and catalyzes ATP hydrolysis.

Its subcellular location is the cytoplasm. It carries out the reaction ATP-dependent breakage, passage and rejoining of double-stranded DNA.. In terms of biological role, a type II topoisomerase that negatively supercoils closed circular double-stranded (ds) DNA in an ATP-dependent manner to modulate DNA topology and maintain chromosomes in an underwound state. Negative supercoiling favors strand separation, and DNA replication, transcription, recombination and repair, all of which involve strand separation. Also able to catalyze the interconversion of other topological isomers of dsDNA rings, including catenanes and knotted rings. Type II topoisomerases break and join 2 DNA strands simultaneously in an ATP-dependent manner. In Pseudomonas aeruginosa (strain ATCC 15692 / DSM 22644 / CIP 104116 / JCM 14847 / LMG 12228 / 1C / PRS 101 / PAO1), this protein is DNA gyrase subunit A.